The following is a 1340-amino-acid chain: WASH complex subunit 2 (1340 aa).

A sufficient for interaction with WASHC3, WASHC4 and WASHC5; required for interaction with WASHC1 region spans residues 1-219; the sequence is MNRTTPDQEL…VGSDRGSIVD (219 aa). Serine 157, serine 159, serine 204, serine 205, and serine 209 each carry phosphoserine. Low complexity predominate over residues 201–213; the sequence is GELSSEEGSVGSD. Residues 201–404 form a disordered region; it reads GELSSEEGSV…SSSKPGKKIP (204 aa). Residues 219–231 are compositionally biased toward acidic residues; sequence DTEEEKEEEESDE. The segment covering 232 to 241 has biased composition (basic and acidic residues); that stretch reads DFAHHSDNDQ. 2 stretches are compositionally biased toward acidic residues: residues 249 to 258 and 265 to 275; these read SDEEEDDDGC and EKEEEDIEDIE. Serine 287 is modified (phosphoserine). The segment covering 292–306 has biased composition (basic and acidic residues); that stretch reads LAARIKGDAVGRVDE. Threonine 330 is subject to Phosphothreonine. Over residues 354–365 the composition is skewed to gly residues; the sequence is GSGGGLFSGGKG. The segment at 355-599 is sufficient for interaction with CCDC93; sequence SGGGLFSGGK…QTLSLQAQGE (245 aa). An interaction with VPS35 region spans residues 356 to 1340; it reads GGGLFSGGKG…DDPLNAFGGQ (985 aa). Residues 366 to 377 carry the LFa 1 motif; sequence LFDDEDEESDLF. Phosphoserine occurs at positions 394 and 396. 3 consecutive short sequence motifs (LFa) follow at residues 410-418, 449-462, and 481-490; these read VFLGDTDVF, LFDDDDGDDDDDFF, and IFGDDEGDLF. Disordered regions lie at residues 421-586, 618-663, and 695-838; these read ASVP…GGTA, SSDE…KASL, and DSGG…STGV. Acidic residues predominate over residues 450–461; the sequence is FDDDDGDDDDDF. Over residues 506-516 the composition is skewed to basic and acidic residues; that stretch reads DENKARAEKKV. Over residues 517-527 the composition is skewed to low complexity; that stretch reads SLPSSKNLKPS. 3 short sequence motifs (LFa) span residues 536–547, 571–582, and 616–628; these read LFSDEEDSEDLF, LFEDEDEEDNLF, and LFSSDEEDQWNIP. Serine 538 and serine 543 each carry phosphoserine. Positions 546–566 are enriched in low complexity; sequence LFSSQSASKLKGAPLLPGKLP. Phosphoserine is present on residues serine 618 and serine 619. The span at 636–646 shows a compositional bias: basic and acidic residues; it reads SDSRSKGESRD. Short sequence motifs (LFa) lie at residues 663 to 673, 689 to 701, and 725 to 737; these read LFEEDEEDDLF, LFEDDVDSGGSLF, and LFSDEEEKEAQLG. A phosphoserine mark is found at serine 727, serine 751, serine 786, and serine 801. The span at 740–767 shows a compositional bias: basic and acidic residues; it reads PVDKKVESAKESLKFGRTDVAESEKEGL. The LFa 11 motif lies at 802–816; that stretch reads LFDEEEDKMEDQNTI. Positions 822–833 are enriched in basic and acidic residues; sequence EVGKGRDPDARP. Short sequence motifs (LFa) lie at residues 838–846 and 855–861; these read VFQDEELLF and DPDVDLF. A phosphoserine mark is found at serine 873 and serine 876. An LFa 14 motif is present at residues 877–887; that stretch reads LFGDDEDDDLF. Disordered regions lie at residues 906–950 and 987–1205; these read DYSV…KEPS and FPSS…EDED. Over residues 916–930 the composition is skewed to basic and acidic residues; it reads KHPETIQGIKEKGIW. An interaction with phospholipids region spans residues 936–1340; it reads QDSSGLAPFK…DDPLNAFGGQ (405 aa). Over residues 1027 to 1045 the composition is skewed to basic residues; that stretch reads NKSRVKMRGKRRPQTRAAR. Positions 1028-1046 are required for interaction with F-actin-capping protein subunit alpha (CAPZA1 or CAPZA2 or CAPZA3); the sequence is KSRVKMRGKRRPQTRAARR. Phosphoserine is present on residues serine 1053 and serine 1086. Residues 1093-1109 show a composition bias toward low complexity; the sequence is EALAAAAAPWEGGPVPG. Residue serine 1113 is modified to Phosphoserine. Short sequence motifs (LFa) lie at residues 1128-1135, 1170-1184, 1200-1208, 1233-1239, 1261-1269, and 1289-1298; these read LFDSGDIF, MFPALGEASSDDDLF, LLEDEDDLF, IFEDDIF, LFDDNIDIF, and IFDDDMDDIF. A phosphoserine mark is found at serine 1178 and serine 1179. Residues 1301–1325 are disordered; it reads GIQAKTAKPKSRSAQAAPEPRFEHK. Positions 1329-1337 match the LFa 21 motif; sequence IFDDPLNAF.

Belongs to the FAM21 family. As to quaternary structure, component of the WASH core complex also described as WASH regulatory complex (SHRC) composed of WASHC1, WASHC2, WASHC3, WASHC4 and WASHC5; in the complex interacts (via N-terminus) directly with WASHC1. The WASH core complex associates with the F-actin-capping protein dimer (formed by CAPZA1, CAPZA2 or CAPZA3 and CAPZB) in a transient or substoichiometric manner which was initially described as WASH complex. Interacts with VPS35; mediates the association with the retromer CSC complex. Interacts with FKBP15. Interacts with CCDC93, CCDC22, VPS35L; indicative for an association of the WASH core complex with the CCC and retriever complexes. Directly interacts with TBC1D23.

Its subcellular location is the early endosome membrane. It localises to the cell membrane. Its function is as follows. Acts as a component of the WASH core complex that functions as a nucleation-promoting factor (NPF) at the surface of endosomes, where it recruits and activates the Arp2/3 complex to induce actin polymerization, playing a key role in the fission of tubules that serve as transport intermediates during endosome sorting. Mediates the recruitment of the WASH core complex to endosome membranes via binding to phospholipids and VPS35 of the retromer CSC. Mediates the recruitment of the F-actin-capping protein dimer to the WASH core complex probably promoting localized F-actin polymerization needed for vesicle scission. Via its C-terminus binds various phospholipids, most strongly phosphatidylinositol 4-phosphate (PtdIns-(4)P), phosphatidylinositol 5-phosphate (PtdIns-(5)P) and phosphatidylinositol 3,5-bisphosphate (PtdIns-(3,5)P2). Involved in the endosome-to-plasma membrane trafficking and recycling of SNX27-retromer-dependent cargo proteins, such as GLUT1. Required for the association of DNAJC13, ENTR1, ANKRD50 with retromer CSC subunit VPS35. Required for the endosomal recruitment of CCC and retriever complexes subunits COMMD1 and CCDC93 as well as the retrievere complex subunit VPS35L. This chain is WASH complex subunit 2, found in Pongo abelii (Sumatran orangutan).